A 213-amino-acid chain; its full sequence is Gas vesicle protein F1 (213 aa).

This sequence belongs to the gas vesicle GvpF/GvpL family. Binds GvpA1 in early growth stages; is the only one of GvpF1 to GvpM1 that interacts with GvpA1 in H.volcanii experiments. GvpF to GvpM interact with each other in vitro, and may form multi-subunit complex(es). Interacts with GvpC1 and GvpO1.

Its subcellular location is the gas vesicle. The protein localises to the cytoplasm. In terms of biological role, might be involved in preventing aggregation of GvpA1. Proteins GvpF to GvpM might be involved in nucleating gas vesicle formation. A minor component of the gas vesicle, also found in soluble extracts. Gas vesicles are hollow, gas filled proteinaceous nanostructures found in several microbial planktonic microorganisms. They allow positioning of halobacteria at the optimal depth for growth in the poorly aerated, shallow brine pools of their habitat. Its function is as follows. Expression of a 9.5 kb p-vac DNA fragment containing 2 divergently transcribed regions (gvpD-gvpE-gvpF-gvpG-gvpH-gvpI-gvpJ-gvpK-gvpL-gvpM and gvpA-gvpC-gvpN-gvpO) allows H.volcanii to produce gas vesicles. A minimal gas vesicle can be made in H.volcanii by gvpA1-gvpO1 plus gvpF1-gvpG1-gvpJ1-gvpK1-gvpL1-gvpM1; lack of enough GvpJ1 prevents formation. The same region restores gas vesicle production in H.halobium without the p-vac locus. The sequence is that of Gas vesicle protein F1 (gvpF11) from Halobacterium salinarum (strain ATCC 700922 / JCM 11081 / NRC-1) (Halobacterium halobium).